A 205-amino-acid chain; its full sequence is Holliday junction branch migration complex subunit RuvA (205 aa).

Positions 1-62 (MFEYVTGYVE…EDIMALYGFK (62 aa)) are domain I. The tract at residues 63–141 (TREERLLFTK…DVVPDAFVDL (79 aa)) is domain II. The tract at residues 142-152 (FSDTERFDEKK) is flexible linker. The interval 153–205 (GTSAELDEALEALRALGYAEREVSRVVPELLKESLTTDQYIKKALSLLLNGKR) is domain III.

The protein belongs to the RuvA family. As to quaternary structure, homotetramer. Forms an RuvA(8)-RuvB(12)-Holliday junction (HJ) complex. HJ DNA is sandwiched between 2 RuvA tetramers; dsDNA enters through RuvA and exits via RuvB. An RuvB hexamer assembles on each DNA strand where it exits the tetramer. Each RuvB hexamer is contacted by two RuvA subunits (via domain III) on 2 adjacent RuvB subunits; this complex drives branch migration. In the full resolvosome a probable DNA-RuvA(4)-RuvB(12)-RuvC(2) complex forms which resolves the HJ.

It localises to the cytoplasm. In terms of biological role, the RuvA-RuvB-RuvC complex processes Holliday junction (HJ) DNA during genetic recombination and DNA repair, while the RuvA-RuvB complex plays an important role in the rescue of blocked DNA replication forks via replication fork reversal (RFR). RuvA specifically binds to HJ cruciform DNA, conferring on it an open structure. The RuvB hexamer acts as an ATP-dependent pump, pulling dsDNA into and through the RuvAB complex. HJ branch migration allows RuvC to scan DNA until it finds its consensus sequence, where it cleaves and resolves the cruciform DNA. The protein is Holliday junction branch migration complex subunit RuvA of Bacillus cereus (strain G9842).